Here is a 463-residue protein sequence, read N- to C-terminus: Retinoic acid receptor RXR-gamma (463 aa).

The tract at residues 1-138 is modulating; that stretch reads MYGNYSHFMK…TSPGSLVKHI (138 aa). The tract at residues 18-53 is disordered; sequence SPGHTGSTSMSPSAALSTGKPMDSHPSYTDTPVSAP. Over residues 21–33 the composition is skewed to polar residues; it reads HTGSTSMSPSAAL. Residues 136-211 constitute a DNA-binding region (nuclear receptor); that stretch reads KHICAICGDR…MGMKREAVQE (76 aa). NR C4-type zinc fingers lie at residues 139 to 159 and 175 to 199; these read CAIC…CEGC and CRDN…YQKC. The interval 205 to 230 is hinge; sequence KREAVQEERQRSRERAESEAECATSG. The 229-residue stretch at 231-459 folds into the NR LBD domain; the sequence is HEDMPVERIL…TFLMEMLETP (229 aa).

This sequence belongs to the nuclear hormone receptor family. NR2 subfamily. In terms of assembly, homodimer. Heterodimer with a RAR molecule. Binds DNA preferentially as a RAR/RXR heterodimer. Interacts with RARA. Post-translationally, acetylated by EP300. Expressed in aortic endothelial cells (at protein level).

The protein localises to the nucleus. Its subcellular location is the cytoplasm. Receptor for retinoic acid. Retinoic acid receptors bind as heterodimers to their target response elements in response to their ligands, all-trans or 9-cis retinoic acid, and regulate gene expression in various biological processes. The RAR/RXR heterodimers bind to the retinoic acid response elements (RARE) composed of tandem 5'-AGGTCA-3' sites known as DR1-DR5. The high affinity ligand for RXRs is 9-cis retinoic acid. The polypeptide is Retinoic acid receptor RXR-gamma (RXRG) (Homo sapiens (Human)).